The primary structure comprises 209 residues: RNA chaperone ProQ (209 aa).

The tract at residues 101–155 is disordered; that stretch reads LAESKAKVQARRKEQAQKAREEGKAKAKPAANKKPQQPRRTNKPKVQKPTKPVET. The span at 111–125 shows a compositional bias: basic and acidic residues; that stretch reads RRKEQAQKAREEGKA. The span at 136 to 148 shows a compositional bias: basic residues; that stretch reads QQPRRTNKPKVQK.

The protein belongs to the ProQ family.

Its subcellular location is the cytoplasm. Functionally, RNA chaperone with significant RNA binding, RNA strand exchange and RNA duplexing activities. This chain is RNA chaperone ProQ, found in Vibrio parahaemolyticus serotype O3:K6 (strain RIMD 2210633).